The following is a 373-amino-acid chain: Trifolitoxin-processing protein TfxB (373 aa).

It to E.coli McbC which is involved in the processing of microcin B17 (MCCB17).

It is found in the cytoplasm. Functionally, the actions of the proteins TfxB, TfxD and TfxF are implicated in the processing of the inactive trifolitoxin (TfxA) precursor into the active peptide. This chain is Trifolitoxin-processing protein TfxB (tfxB), found in Rhizobium leguminosarum bv. trifolii.